Reading from the N-terminus, the 190-residue chain is Imidazoleglycerol-phosphate dehydratase (190 aa).

Belongs to the imidazoleglycerol-phosphate dehydratase family.

The protein resides in the cytoplasm. It catalyses the reaction D-erythro-1-(imidazol-4-yl)glycerol 3-phosphate = 3-(imidazol-4-yl)-2-oxopropyl phosphate + H2O. The protein operates within amino-acid biosynthesis; L-histidine biosynthesis; L-histidine from 5-phospho-alpha-D-ribose 1-diphosphate: step 6/9. The polypeptide is Imidazoleglycerol-phosphate dehydratase (Sulfurimonas denitrificans (strain ATCC 33889 / DSM 1251) (Thiomicrospira denitrificans (strain ATCC 33889 / DSM 1251))).